Consider the following 142-residue polypeptide: MAVAVTAVLFLAVVIAPQWTETKKPPRPSDTSDTSGTSGRDRRTMCPLSIPGIVQNCYATLNAFPSKECCKDLKTASKREVTCLCNNVIAHPDPLYTNTNQVNKACGVLDKYACDAGNSNGGATKKIVASMGLFGVVASLFF.

The first 22 residues, 1-22 (MAVAVTAVLFLAVVIAPQWTET), serve as a signal peptide directing secretion. The disordered stretch occupies residues 21-43 (ETKKPPRPSDTSDTSGTSGRDRR). Positions 29–38 (SDTSDTSGTS) are enriched in low complexity. 4 disulfide bridges follow: C46-C85, C57-C69, C70-C106, and C83-C114. N120 is lipidated: GPI-anchor amidated asparagine. A propeptide spans 121-142 (GGATKKIVASMGLFGVVASLFF) (removed in mature form).

The protein belongs to the plant LTP family.

The protein resides in the cell membrane. Probable lipid transfer protein. The protein is Non-specific lipid transfer protein GPI-anchored 34 of Arabidopsis thaliana (Mouse-ear cress).